The sequence spans 177 residues: Large ribosomal subunit protein uL6 (177 aa).

Belongs to the universal ribosomal protein uL6 family. In terms of assembly, part of the 50S ribosomal subunit.

In terms of biological role, this protein binds to the 23S rRNA, and is important in its secondary structure. It is located near the subunit interface in the base of the L7/L12 stalk, and near the tRNA binding site of the peptidyltransferase center. This chain is Large ribosomal subunit protein uL6, found in Cupriavidus taiwanensis (strain DSM 17343 / BCRC 17206 / CCUG 44338 / CIP 107171 / LMG 19424 / R1) (Ralstonia taiwanensis (strain LMG 19424)).